Consider the following 504-residue polypeptide: MSFVVTVPEAVAAAAGDLAAIGSTLREATAAAAGPTTGLAAAAADDVSIAVSQLFGRYGQEFQTVSNQLAAFHTEFVRTLNRGAAAYLNTESANGGQLFGQIEAGQRAVSAAAAAAPGGAYGQLVANTATNLESLYGAWSANPFPFLRQIIANQQVYWQQIAAALANAVQNFPALVANLPAAIDAAVQQFLAFNAAYYIQQIISSQIGFAQLFATTVGQGVTSVIAGWPNLAAELQLAFQQLLVGDYNAAVANLGKAMTNLLVTGFDTSDVTIGTMGTTISVTAKPKLLGPLGDLFTIMTIPAQEAQYFTNLMPPSILRDMSQNFTNVLTTLSNPNIQAVASFDIATTAGTLSTFFGVPLVLTYATLGAPFASLNAIATSAETIEQALLAGNYLGAVGALIDAPAHALDGFLNSATVLDTPILVPTGLPSPLPPTVGITLHLPFDGILVPPHPVTATISFPGAPVPIPGFPTTVTVFGTPFMGMAPLLINYIPQQLALAIKPAA.

The region spanning 4–94 (VVTVPEAVAA…AAYLNTESAN (91 aa)) is the PE domain.

It belongs to the mycobacterial PE family. PGRS subfamily. As to quaternary structure, interacts with host Toll-like receptor 2 (TLR2).

The protein localises to the secreted. Its subcellular location is the cell wall. Its function is as follows. Supports mycobacterial virulence via inhibition of phagosome maturation and host inducible nitric oxide synthase (iNOS) expression. May promote the survival within macrophages by disturbing the cytokines profiles and blocking the endoplasmic reticulum (ER) stress-mediated apoptosis. May also affect bacterial cell wall composition. Expression in Mycobacterium smegmatis, a nonpathogenic species naturally deficient in PE_PGRS genes, results in enhanced resistance to various in vitro stresses. It also leads to phagosome maturation arrest and increased survival in macrophages. The polypeptide is PE-PGRS family protein PE_PGRS62 (Mycobacterium tuberculosis (strain ATCC 25618 / H37Rv)).